A 416-amino-acid polypeptide reads, in one-letter code: E3 ubiquitin-protein ligase makorin-2 (416 aa).

2 C3H1-type zinc fingers span residues 2–29 (STKQVTCRYFMHGVCREGSQCLFSHDLA) and 31–58 (SKPSTICKYYQKGYCAYGARCRYDHTKP). The interval 61–144 (AAGGAVGPAP…DPQTSPEMKP (84 aa)) is disordered. Positions 95 to 123 (HSNEPGKREKKTLVLRDRNLTGLAEDKTP) are enriched in basic and acidic residues. Serine 139 bears the Phosphoserine mark. The segment at 165-192 (SNEPQLCPYAAAGECRFGDACVYLHGDM) adopts a C3H1-type 3 zinc-finger fold. The makorin-type Cys-His stretch occupies residues 193 to 222 (CEICRLQVLHPFDPEQRKAHEKMCMSTFEH). The RING-type zinc finger occupies 238 to 292 (CSICMEVILEKASASERRFGILSNCSHTYCLSCIRQWRCAKQFENPIIKSCPECR). The C3H1-type 4 zinc-finger motif lies at 321–350 (GMGKKACKYFEQGKGTCPFGSKCLYRHAYP).

Interacts with PDLIM2 (via LIM zinc-binding domain). Interacts with RELA. Highly expressed in the testis, and lower expression in the brain, thymus, heart, lung, liver, spleen, kidney, ovary, uterus, and seminal vesicle (at protein level). Expressed in primary immune cells, such as CD4-positive and CD8-positive T cells, CD19-positive B cells and CD11c-positive dendritic cells, and in embryonic fibroblasts (at protein level).

It is found in the cytoplasm. The protein localises to the nucleus. It carries out the reaction S-ubiquitinyl-[E2 ubiquitin-conjugating enzyme]-L-cysteine + [acceptor protein]-L-lysine = [E2 ubiquitin-conjugating enzyme]-L-cysteine + N(6)-ubiquitinyl-[acceptor protein]-L-lysine.. Its pathway is protein modification; protein ubiquitination. In terms of biological role, E3 ubiquitin ligase catalyzing the covalent attachment of ubiquitin moieties onto substrate proteins. Promotes the polyubiquitination and proteasome-dependent degradation of RELA/p65, thereby suppressing RELA-mediated NF-kappa-B transactivation and negatively regulating inflammatory responses. Plays a role in the regulation of spermiation and in male fertility. In Mus musculus (Mouse), this protein is E3 ubiquitin-protein ligase makorin-2 (Mkrn2).